We begin with the raw amino-acid sequence, 523 residues long: 2-isopropylmalate synthase (523 aa).

A Pyruvate carboxyltransferase domain is found at Val-5 to Trp-267. Mn(2+) is bound by residues Asp-14, His-202, His-204, and Asn-238. The regulatory domain stretch occupies residues Arg-392–Val-523.

Belongs to the alpha-IPM synthase/homocitrate synthase family. LeuA type 1 subfamily. In terms of assembly, homodimer. The cofactor is Mn(2+).

It is found in the cytoplasm. It catalyses the reaction 3-methyl-2-oxobutanoate + acetyl-CoA + H2O = (2S)-2-isopropylmalate + CoA + H(+). Its pathway is amino-acid biosynthesis; L-leucine biosynthesis; L-leucine from 3-methyl-2-oxobutanoate: step 1/4. Functionally, catalyzes the condensation of the acetyl group of acetyl-CoA with 3-methyl-2-oxobutanoate (2-ketoisovalerate) to form 3-carboxy-3-hydroxy-4-methylpentanoate (2-isopropylmalate). The sequence is that of 2-isopropylmalate synthase from Salmonella arizonae (strain ATCC BAA-731 / CDC346-86 / RSK2980).